A 1545-amino-acid chain; its full sequence is Dual oxidase 2 (1545 aa).

Positions M1 to G25 are cleaved as a signal peptide. The Extracellular portion of the chain corresponds to Q26 to T601. Positions S30–P596 are peroxidase-like; mediates peroxidase activity. N-linked (GlcNAc...) asparagine glycosylation is found at N100, N312, N348, N358, N455, and N549. Residues C124 and C1159 are joined by a disulfide bond. Residues I602 to F622 form a helical membrane-spanning segment. Residues R623–R1037 lie on the Cytoplasmic side of the membrane. 3 EF-hand domains span residues P819 to G854, S855 to I890, and Q899 to E934. 9 residues coordinate Ca(2+): D832, D834, N836, Y838, E843, D868, D870, N872, and E879. Residues R960–R1242 are interaction with TXNDC11. The chain crosses the membrane as a helical span at residues H1038 to Y1058. Topologically, residues Y1059–F1074 are extracellular. A helical transmembrane segment spans residues V1075 to T1097. The Ferric oxidoreductase domain maps to R1081–S1263. Residues M1098 to R1125 are Cytoplasmic-facing. A helical transmembrane segment spans residues W1126–I1148. Residues F1149–Q1182 are Extracellular-facing. Residues T1183 to A1203 traverse the membrane as a helical segment. The Cytoplasmic portion of the chain corresponds to S1204 to H1220. The helical transmembrane segment at F1221–P1241 threads the bilayer. Position 1242 (R1242) is a topological domain, extracellular. The chain crosses the membrane as a helical span at residues F1243–S1263. Residues R1264–E1370 form the FAD-binding FR-type domain. Residues R1264–F1545 lie on the Cytoplasmic side of the membrane.

In the N-terminal section; belongs to the peroxidase family. Heterodimer with DUOXA2; disulfide-linked. Interacts with TXNDC11, TPO and CYBA. In terms of processing, N-glycosylated. Expressed in thyroid, and the digestive tract especially in stomach, cecum and sigmoidal colon (at protein level). Expressed in thyroid.

The protein resides in the apical cell membrane. It is found in the cell junction. It carries out the reaction NADH + O2 + H(+) = H2O2 + NAD(+). The catalysed reaction is NADPH + O2 + H(+) = H2O2 + NADP(+). It participates in hormone biosynthesis; thyroid hormone biosynthesis. Its activity is regulated as follows. The NADPH oxidase activity is calcium-dependent. Peroxidase activity is inhibited by aminobenzohydrazide. Functionally, generates hydrogen peroxide which is required for the activity of thyroid peroxidase/TPO and lactoperoxidase/LPO. Plays a role in thyroid hormones synthesis and lactoperoxidase-mediated antimicrobial defense at the surface of mucosa. May have its own peroxidase activity through its N-terminal peroxidase-like domain. This chain is Dual oxidase 2 (DUOX2), found in Sus scrofa (Pig).